Reading from the N-terminus, the 122-residue chain is Large ribosomal subunit protein uL14 (122 aa).

Belongs to the universal ribosomal protein uL14 family. Part of the 50S ribosomal subunit. Forms a cluster with proteins L3 and L19. In the 70S ribosome, L14 and L19 interact and together make contacts with the 16S rRNA in bridges B5 and B8.

In terms of biological role, binds to 23S rRNA. Forms part of two intersubunit bridges in the 70S ribosome. In Methylococcus capsulatus (strain ATCC 33009 / NCIMB 11132 / Bath), this protein is Large ribosomal subunit protein uL14.